The chain runs to 160 residues: Large ribosomal subunit protein uL22c (160 aa).

This sequence belongs to the universal ribosomal protein uL22 family. In terms of assembly, part of the 50S ribosomal subunit.

It localises to the plastid. The protein localises to the chloroplast. This protein binds specifically to 23S rRNA. In terms of biological role, the globular domain of the protein is located near the polypeptide exit tunnel on the outside of the subunit, while an extended beta-hairpin is found that lines the wall of the exit tunnel in the center of the 70S ribosome. The protein is Large ribosomal subunit protein uL22c (rpl22) of Crucihimalaya wallichii (Rock-cress).